Reading from the N-terminus, the 285-residue chain is VQ motif-containing protein 20 (285 aa).

Residues 1–10 (MSSTYKDNHP) show a composition bias toward basic and acidic residues. The interval 1-68 (MSSTYKDNHP…PSPSSFSSAA (68 aa)) is disordered. Basic residues predominate over residues 11–23 (YHHHPHHHHHHPK). The VQ signature appears at 91–100 (FMALVQKLTG). Positions 195 to 218 (YSAVAIPPQPPPHPPPPPPPPSMY) are disordered. Positions 201–216 (PPQPPPHPPPPPPPPS) are enriched in pro residues.

It is found in the nucleus. Its function is as follows. May function as negative regulator of plant defense. The polypeptide is VQ motif-containing protein 20 (Arabidopsis thaliana (Mouse-ear cress)).